A 476-amino-acid polypeptide reads, in one-letter code: Vitamin D-binding protein (476 aa).

Positions 1–16 are cleaved as a signal peptide; that stretch reads MKRVLVLLLALAFGHA. 3 Albumin domains span residues 17 to 208, 209 to 394, and 395 to 476; these read LERG…QMKH, LSLL…LLKR, and QLTS…TLQS. 14 cysteine pairs are disulfide-bonded: C29-C75, C74-C83, C96-C112, C111-C122, C145-C190, C189-C198, C220-C266, C265-C273, C286-C300, C299-C311, C335-C376, C375-C384, C407-C453, and C452-C462. N-linked (GlcNAc...) asparagine glycosylation is present at N288. The residue at position 434 (S434) is a Phosphoserine.

It belongs to the ALB/AFP/VDB family. Associates with membrane-bound immunoglobulin on the surface of B-lymphocytes and with IgG Fc receptor on the membranes of T-lymphocytes. Interacts with LRP2; the interaction is required for renal uptake of GC in complex with 25-hydroxyvitamin D3.

It localises to the secreted. Involved in vitamin D transport and storage, scavenging of extracellular G-actin, enhancement of the chemotactic activity of C5 alpha for neutrophils in inflammation and macrophage activation. This chain is Vitamin D-binding protein (Gc), found in Mus musculus (Mouse).